The following is a 96-amino-acid chain: uncharacterized protein (96 aa).

This is an uncharacterized protein from Escherichia coli (strain K12).